The chain runs to 480 residues: Ribulose bisphosphate carboxylase large chain (480 aa).

The propeptide occupies 1–2 (MS). An N-acetylproline modification is found at Pro3. Position 14 is an N6,N6,N6-trimethyllysine (Lys14). The substrate site is built by Asn123 and Thr173. The active-site Proton acceptor is the Lys175. Lys177 provides a ligand contact to substrate. 3 residues coordinate Mg(2+): Lys201, Asp203, and Glu204. Lys201 is subject to N6-carboxylysine. Residue His294 is the Proton acceptor of the active site. Residues Arg295, His327, and Ser379 each coordinate substrate.

This sequence belongs to the RuBisCO large chain family. Type I subfamily. In terms of assembly, heterohexadecamer of 8 large chains and 8 small chains; disulfide-linked. The disulfide link is formed within the large subunit homodimers. Mg(2+) is required as a cofactor. The disulfide bond which can form in the large chain dimeric partners within the hexadecamer appears to be associated with oxidative stress and protein turnover.

Its subcellular location is the plastid. The protein resides in the chloroplast. The catalysed reaction is 2 (2R)-3-phosphoglycerate + 2 H(+) = D-ribulose 1,5-bisphosphate + CO2 + H2O. The enzyme catalyses D-ribulose 1,5-bisphosphate + O2 = 2-phosphoglycolate + (2R)-3-phosphoglycerate + 2 H(+). In terms of biological role, ruBisCO catalyzes two reactions: the carboxylation of D-ribulose 1,5-bisphosphate, the primary event in carbon dioxide fixation, as well as the oxidative fragmentation of the pentose substrate in the photorespiration process. Both reactions occur simultaneously and in competition at the same active site. In Gossypium barbadense (Sea Island cotton), this protein is Ribulose bisphosphate carboxylase large chain.